Consider the following 501-residue polypeptide: Flagellin (501 aa).

Belongs to the bacterial flagellin family.

It localises to the secreted. The protein localises to the bacterial flagellum. In terms of biological role, flagellin is the subunit protein which polymerizes to form the filaments of bacterial flagella. The sequence is that of Flagellin (fliC) from Salmonella choleraesuis (strain SC-B67).